A 530-amino-acid polypeptide reads, in one-letter code: Anthranilate synthase component 1, pyocyanine specific (530 aa).

331–332 (GT) is a substrate binding site. Residue glutamate 364 participates in Mg(2+) binding. Substrate contacts are provided by residues tyrosine 452, arginine 472, 486 to 488 (GAG), and glycine 488. A Mg(2+)-binding site is contributed by glutamate 501.

It belongs to the anthranilate synthase component I family. As to quaternary structure, heterotetramer consisting of two non-identical subunits: a beta subunit (PhnB) and a large alpha subunit (PhnA). It depends on Mg(2+) as a cofactor.

The enzyme catalyses chorismate + L-glutamine = anthranilate + pyruvate + L-glutamate + H(+). It participates in secondary metabolite biosynthesis; pyocyanine biosynthesis. In terms of biological role, part of a heterotetrameric complex that catalyzes the two-step biosynthesis of anthranilate, a precursor for Pseudomonas quinolone signal (2-heptyl-3-hydroxy-4-quinolone; PQS) production which is required to induce the genes for the biosynthesis of the virulence factor pyocyanine (PCN), a characteristic blue-green phenazine pigment produced by P.aeruginosa. In the first step, the glutamine-binding beta subunit (PhnB) of anthranilate synthase (AS) provides the glutamine amidotransferase activity which generates ammonia as a substrate that, along with chorismate, is used in the second step, catalyzed by the large alpha subunit of AS (PhnA) to produce anthranilate. This chain is Anthranilate synthase component 1, pyocyanine specific, found in Pseudomonas aeruginosa (strain ATCC 15692 / DSM 22644 / CIP 104116 / JCM 14847 / LMG 12228 / 1C / PRS 101 / PAO1).